A 185-amino-acid polypeptide reads, in one-letter code: Adenine phosphoribosyltransferase (185 aa).

This sequence belongs to the purine/pyrimidine phosphoribosyltransferase family. In terms of assembly, homodimer.

The protein resides in the cytoplasm. The catalysed reaction is AMP + diphosphate = 5-phospho-alpha-D-ribose 1-diphosphate + adenine. It participates in purine metabolism; AMP biosynthesis via salvage pathway; AMP from adenine: step 1/1. Catalyzes a salvage reaction resulting in the formation of AMP, that is energically less costly than de novo synthesis. The sequence is that of Adenine phosphoribosyltransferase from Kineococcus radiotolerans (strain ATCC BAA-149 / DSM 14245 / SRS30216).